The chain runs to 355 residues: Ubiquinone biosynthesis protein COQ4 homolog, mitochondrial (355 aa).

Zn(2+)-binding residues include His-134, Asp-135, His-138, and Glu-150.

The protein belongs to the COQ4 family. Component of a multi-subunit COQ enzyme complex. Requires Zn(2+) as cofactor.

Its subcellular location is the mitochondrion inner membrane. It catalyses the reaction a 4-hydroxy-3-methoxy-5-(all-trans-polyprenyl)benzoate + H(+) = a 2-methoxy-6-(all-trans-polyprenyl)phenol + CO2. The protein operates within cofactor biosynthesis; ubiquinone biosynthesis. Its function is as follows. Lyase that catalyzes the C1-decarboxylation of 4-hydroxy-3-methoxy-5-(all-trans-polyprenyl)benzoic acid into 2-methoxy-6-(all-trans-polyprenyl)phenol during ubiquinone biosynthesis. In Plasmodium vivax (strain Salvador I), this protein is Ubiquinone biosynthesis protein COQ4 homolog, mitochondrial.